We begin with the raw amino-acid sequence, 694 residues long: Polyribonucleotide nucleotidyltransferase (694 aa).

2 residues coordinate Mg(2+): aspartate 486 and aspartate 492. A KH domain is found at 553–612 (PRIETMQIKPTKIASVIGPGGKQIRQIIEETGVQIDVNDLGVVSISASSASAINKAKEII). One can recognise an S1 motif domain in the interval 622–690 (GKTYRGRVTS…EKGQLKLSHK (69 aa)).

This sequence belongs to the polyribonucleotide nucleotidyltransferase family. The cofactor is Mg(2+).

The protein resides in the cytoplasm. The enzyme catalyses RNA(n+1) + phosphate = RNA(n) + a ribonucleoside 5'-diphosphate. Its function is as follows. Involved in mRNA degradation. Catalyzes the phosphorolysis of single-stranded polyribonucleotides processively in the 3'- to 5'-direction. This Chlamydia pneumoniae (Chlamydophila pneumoniae) protein is Polyribonucleotide nucleotidyltransferase.